The primary structure comprises 216 residues: Cytidylate kinase (216 aa).

ATP is bound at residue 9–17 (GPAASGKGT).

This sequence belongs to the cytidylate kinase family. Type 1 subfamily.

It is found in the cytoplasm. It carries out the reaction CMP + ATP = CDP + ADP. The catalysed reaction is dCMP + ATP = dCDP + ADP. The chain is Cytidylate kinase from Caulobacter sp. (strain K31).